Here is a 384-residue protein sequence, read N- to C-terminus: Probable fructokinase-6, chloroplastic (384 aa).

The transit peptide at 1-46 (MALQATTTTFCFSGPTFRSTPHSLTSKRPISIKATTSSPSRLSNSR) directs the protein to the chloroplast. The disordered stretch occupies residues 34-61 (ATTSSPSRLSNSRSNLKGRALSSDGSTQ). The span at 35 to 48 (TTSSPSRLSNSRSN) shows a compositional bias: low complexity.

Belongs to the carbohydrate kinase PfkB family.

It is found in the plastid. Its subcellular location is the chloroplast. The catalysed reaction is D-fructose + ATP = D-fructose 6-phosphate + ADP + H(+). It functions in the pathway glycan biosynthesis; starch biosynthesis. In terms of biological role, may play an important role in maintaining the flux of carbon towards starch formation. The sequence is that of Probable fructokinase-6, chloroplastic from Arabidopsis thaliana (Mouse-ear cress).